Here is a 279-residue protein sequence, read N- to C-terminus: Phosphonoacetaldehyde hydrolase (279 aa).

Aspartate 20 (nucleophile) is an active-site residue. 2 residues coordinate Mg(2+): aspartate 20 and alanine 22. Lysine 62 acts as the Schiff-base intermediate with substrate in catalysis. Aspartate 196 contributes to the Mg(2+) binding site.

This sequence belongs to the HAD-like hydrolase superfamily. PhnX family. In terms of assembly, homodimer. The cofactor is Mg(2+).

The enzyme catalyses phosphonoacetaldehyde + H2O = acetaldehyde + phosphate + H(+). Functionally, involved in phosphonate degradation. The protein is Phosphonoacetaldehyde hydrolase of Aeromonas hydrophila subsp. hydrophila (strain ATCC 7966 / DSM 30187 / BCRC 13018 / CCUG 14551 / JCM 1027 / KCTC 2358 / NCIMB 9240 / NCTC 8049).